The sequence spans 42 residues: Delta-actitoxin-Ael2d (42 aa).

Intrachain disulfides connect Cys4–Cys37, Cys6–Cys30, and Cys20–Cys38.

It belongs to the sea anemone type 3 (BDS) potassium channel toxin family.

It is found in the secreted. Its subcellular location is the nematocyst. Functionally, binds to voltage-gated sodium channels (Nav), and slows down the inactivation of mammalian Nav1.2/SCN2A, Nav1.3/SCN3A Nav1.4/SCN4A, Nav1.6/SCN8A, insect DmNav1 and BgNav1 channels, and arachnid VdNav1 channel. This toxin acts by binding to site 3 of sodium channels. This chain is Delta-actitoxin-Ael2d, found in Anthopleura elegantissima (Green aggregating anemone).